Consider the following 394-residue polypeptide: Elongation factor Tu (394 aa).

In terms of domain architecture, tr-type G spans 10–204; that stretch reads KPHVNIGTIG…AVDSYIPQPV (195 aa). The segment at 19–26 is G1; sequence GHVDHGKT. 19-26 is a GTP binding site; it reads GHVDHGKT. Thr-26 lines the Mg(2+) pocket. The interval 60–64 is G2; the sequence is GITIS. The segment at 81–84 is G3; the sequence is DCPG. Residues 81–85 and 136–139 each bind GTP; these read DCPGH and NKVD. Residues 136-139 are G4; the sequence is NKVD. The interval 174 to 176 is G5; sequence SAL.

The protein belongs to the TRAFAC class translation factor GTPase superfamily. Classic translation factor GTPase family. EF-Tu/EF-1A subfamily. Monomer.

It localises to the cytoplasm. The enzyme catalyses GTP + H2O = GDP + phosphate + H(+). GTP hydrolase that promotes the GTP-dependent binding of aminoacyl-tRNA to the A-site of ribosomes during protein biosynthesis. This Rickettsia canadensis (strain McKiel) protein is Elongation factor Tu.